Consider the following 198-residue polypeptide: Recombination protein RecR (198 aa).

A C4-type zinc finger spans residues cysteine 56–cysteine 71. Residues histidine 79–proline 174 enclose the Toprim domain.

Belongs to the RecR family.

May play a role in DNA repair. It seems to be involved in an RecBC-independent recombinational process of DNA repair. It may act with RecF and RecO. The sequence is that of Recombination protein RecR from Xylella fastidiosa (strain Temecula1 / ATCC 700964).